The following is a 124-amino-acid chain: UPF0482 protein YPK_1977 (124 aa).

The first 32 residues, 1–32 (MMKINNLPRLIRAFLPATLLMLPLVWQTPALA), serve as a signal peptide directing secretion. Residues 47–69 (GGNNDPMSKEQARQSQQQWDETN) are disordered.

Belongs to the UPF0482 family.

In Yersinia pseudotuberculosis serotype O:3 (strain YPIII), this protein is UPF0482 protein YPK_1977.